The primary structure comprises 153 residues: Large ribosomal subunit protein uL15 (153 aa).

The segment at 21 to 41 (RGIGSGKGKTGGRGIKGQKSR) is disordered. The segment covering 23 to 35 (IGSGKGKTGGRGI) has biased composition (gly residues).

It belongs to the universal ribosomal protein uL15 family. Part of the 50S ribosomal subunit.

In terms of biological role, binds to the 23S rRNA. The chain is Large ribosomal subunit protein uL15 from Rickettsia massiliae (strain Mtu5).